Reading from the N-terminus, the 733-residue chain is Nuclear hormone receptor family member nhr-66 (733 aa).

Composition is skewed to low complexity over residues 113–130 (PAIP…SQAS) and 165–185 (QQNR…QQQN). The disordered stretch occupies residues 113-190 (PAIPSSSSCS…AQQQNSMARK (78 aa)). The nuclear receptor DNA-binding region spans 266–343 (VPACAICGTD…SGMDKNSVQH (78 aa)). 2 consecutive NR C4-type zinc fingers follow at residues 269–289 (CAIC…CAAC) and 305–326 (CNKG…CRAC). The disordered stretch occupies residues 361–396 (PDAEFEPSAKVSTVSEPSTSSGPSGGFNQNVSSPAG). Residues 371–382 (VSTVSEPSTSSG) show a composition bias toward low complexity. The 244-residue stretch at 444–687 (CLGDWFRKPS…ACFNQMLDVE (244 aa)) folds into the NR LBD domain. The interval 676-687 (ADACFNQMLDVE) is AF-2. The tract at residues 691–733 (VSPDGQKDSEAEQGPSPVSVPEAARGSYQDDDMPPVLEKNCDL) is disordered.

This sequence belongs to the nuclear hormone receptor family. In terms of assembly, interacts with nuclear hormone receptor nhr-49; the interaction is direct. Widely expressed, including in hypodermis, gut, muscle, and neuronal cells of the ventral nerve cord, head, and tail ganglia. Expressed in the head ganglion in several sensory and interneurons, including AVA.

It localises to the nucleus. Functionally, transcription factor. Binds to regulatory elements and regulates transcription of target genes, including the potassium channel accessory subunit mps-2. Negatively regulates transcription of mps-2, thereby modulating age-dependent memory decline. In concert with nuclear hormone receptor nhr-49, involved in regulating target genes with roles in sphingolipid breakdown and lipid remodeling. Plays a role in modulating mitochondrial morphology and function. This Caenorhabditis elegans protein is Nuclear hormone receptor family member nhr-66.